Reading from the N-terminus, the 259-residue chain is tRNA (guanine-N(7)-)-methyltransferase (259 aa).

S-adenosyl-L-methionine contacts are provided by residues G80, 103–104, 136–137, and L156; these read EL and NS. Residue D159 is part of the active site. 234-236 lines the S-adenosyl-L-methionine pocket; sequence TEE.

This sequence belongs to the class I-like SAM-binding methyltransferase superfamily. TrmB family.

The protein resides in the nucleus. It carries out the reaction guanosine(46) in tRNA + S-adenosyl-L-methionine = N(7)-methylguanosine(46) in tRNA + S-adenosyl-L-homocysteine. Its pathway is tRNA modification; N(7)-methylguanine-tRNA biosynthesis. Functionally, catalyzes the formation of N(7)-methylguanine at position 46 (m7G46) in tRNA. The sequence is that of tRNA (guanine-N(7)-)-methyltransferase from Oryza sativa subsp. indica (Rice).